The following is a 42-amino-acid chain: Photosystem II reaction center protein J (42 aa).

Residues 10 to 30 form a helical membrane-spanning segment; it reads IPLWLVGTVAGTAAIGLLGIF.

This sequence belongs to the PsbJ family. As to quaternary structure, PSII is composed of 1 copy each of membrane proteins PsbA, PsbB, PsbC, PsbD, PsbE, PsbF, PsbH, PsbI, PsbJ, PsbK, PsbL, PsbM, PsbT, PsbX, PsbY, PsbZ, Psb30/Ycf12, at least 3 peripheral proteins of the oxygen-evolving complex and a large number of cofactors. It forms dimeric complexes.

The protein resides in the plastid. The protein localises to the chloroplast thylakoid membrane. Its function is as follows. One of the components of the core complex of photosystem II (PSII). PSII is a light-driven water:plastoquinone oxidoreductase that uses light energy to abstract electrons from H(2)O, generating O(2) and a proton gradient subsequently used for ATP formation. It consists of a core antenna complex that captures photons, and an electron transfer chain that converts photonic excitation into a charge separation. This chain is Photosystem II reaction center protein J, found in Pleurastrum terricola (Filamentous green alga).